Reading from the N-terminus, the 840-residue chain is SLIT and NTRK-like protein 6 (840 aa).

Positions 1 to 18 (MKLWTYLLYPSLLACLSL) are cleaved as a signal peptide. One can recognise an LRRNT 1 domain in the interval 22–67 (SPMPSVRGSCDTLCNCEEKDGIMIINCEEKGINKLSQISVPPSRPF). At 23 to 609 (PMPSVRGSCD…LTDAVPLSVL (587 aa)) the chain is on the extracellular side. LRR repeat units lie at residues 89-110 (NALS…AFNG), 113-134 (LLKQ…TFHG), 137-158 (NLEF…AFSK), 161-182 (RLKV…IFRF), and 184-205 (PLTH…GFLE). One can recognise an LRRCT 1 domain in the interval 218-269 (NKWACNCELLQLKNWLENMPPQSIIGDVICYSPPPFKGSVLSRLKKESFCPT). The LRRNT 2 domain maps to 319–360 (PSTQLPVPYCPIPCNCKVLSPSGLLIHCQERNIESLSDLQPP). LRR repeat units lie at residues 363-384 (NPRK…DLTD), 387-408 (TLEM…SFMN), 411-432 (RLQK…MFLG), 435-456 (SLEY…TFNP), 459-480 (KLKV…IFLG), and 482-503 (PLTR…NILD). In terms of domain architecture, LRRCT 2 spans 516-567 (NPWDCSCDLVGLQQWIHKLGKGTMTDDILCTSPGHLDKKELKALNSDLLCPG). Residues 610–630 (ILGLLIVFITIVFCAAGIVVF) traverse the membrane as a helical segment. Residues 631 to 840 (VLHRRRRYKK…DYLEVLEQQT (210 aa)) are Cytoplasmic-facing. The span at 717-726 (QRSLLERENH) shows a compositional bias: basic and acidic residues. Positions 717 to 736 (QRSLLERENHSPLTGSNMKY) are disordered. Residues 727–736 (SPLTGSNMKY) are compositionally biased toward polar residues.

Belongs to the SLITRK family. As to expression, in the embryo, expressed in otic cyst, lateral trunk epidermis and underlying mesodermal tissue, limb bud, maxillary process, cochlea, retina, tongue, tooth primordium, central nervous system, and primordia of visceral organs including lung, gastrointestinal tract and pancreas. In the central nervous system, expressed primarily in dorsal thalamus, cerebellum and medulla.

The protein localises to the cell membrane. Functionally, regulator of neurite outgrowth required for normal hearing and vision. The sequence is that of SLIT and NTRK-like protein 6 (Slitrk6) from Mus musculus (Mouse).